Consider the following 72-residue polypeptide: MFMTSKKMAAAVLAITVAMSLSACSNWSKRDRNTAIGAGAGALGGAVLTDGSTLGTLGGAAVGGVIGHQVGK.

Positions 1-23 (MFMTSKKMAAAVLAITVAMSLSA) are cleaved as a signal peptide. C24 carries the N-palmitoyl cysteine lipid modification. The S-diacylglycerol cysteine moiety is linked to residue C24.

The protein localises to the cell membrane. In terms of biological role, provides resistance to osmotic stress. May be important for stationary-phase survival. This chain is Osmotically-inducible lipoprotein B (osmB), found in Salmonella typhimurium (strain LT2 / SGSC1412 / ATCC 700720).